Consider the following 340-residue polypeptide: L-galactonate-5-dehydrogenase (340 aa).

Zn(2+)-binding residues include cysteine 40, cysteine 65, cysteine 92, cysteine 95, cysteine 98, cysteine 106, and glutamate 146.

This sequence belongs to the zinc-containing alcohol dehydrogenase family. Requires Zn(2+) as cofactor.

The catalysed reaction is L-galactonate + NAD(+) = keto-D-tagaturonate + NADH + H(+). With respect to regulation, inhibited by EDTA. Functionally, catalyzes the oxidation of L-galactonate to D-tagaturonate. Required for growth on L-galactonate as the sole carbon source. In vitro, can also use L-gulonate. The protein is L-galactonate-5-dehydrogenase (lgoD) of Escherichia coli (strain K12).